A 363-amino-acid polypeptide reads, in one-letter code: Trans-2,3-enoyl-CoA reductase-like (363 aa).

S37 is subject to Phosphoserine. Transmembrane regions (helical) follow at residues 143–163, 217–237, and 311–331; these read WTTV…LFYL, LIMS…YINH, and ISFT…LMSI.

It belongs to the steroid 5-alpha reductase family. Predominantly expressed in the heart and skeletal muscle.

The protein resides in the membrane. Its subcellular location is the endoplasmic reticulum. This chain is Trans-2,3-enoyl-CoA reductase-like (TECRL), found in Homo sapiens (Human).